The sequence spans 179 residues: Apoptosis regulator Bcl-2 homolog (179 aa).

A BH1 motif is present at residues glutamate 76–alanine 95. The BH2 signature appears at proline 126–serine 141.

Belongs to the Bcl-2 family. As to quaternary structure, interacts with host BECN1 (via BH3 homology domain); this interaction allows the virus to inhibit BECN1, and thus autophagy. Interacts with host BID. Interacts with host BAX.

It is found in the host mitochondrion. The protein resides in the host endoplasmic reticulum. Suppresses apoptosis in host cell to promote the viral replication. Has the ability to potentially bind to all the members of the proapoptotic Bcl-2 family. Inhibits autophagy by interacting with host Beclin 1 (BECN1). The polypeptide is Apoptosis regulator Bcl-2 homolog (Ornithodoros (relapsing fever ticks)).